A 622-amino-acid polypeptide reads, in one-letter code: Low affinity potassium transport system protein Kup (622 aa).

The next 12 membrane-spanning stretches (helical) occupy residues L9–L29, V49–L69, V103–I123, P137–I157, V165–L185, V213–A233, W247–L267, P276–A296, I337–F357, L363–T383, F396–L416, and L419–T439.

The protein belongs to the HAK/KUP transporter (TC 2.A.72) family.

It localises to the cell inner membrane. It catalyses the reaction K(+)(in) + H(+)(in) = K(+)(out) + H(+)(out). In terms of biological role, responsible for the low-affinity transport of potassium into the cell. Likely operates as a K(+):H(+) symporter. The chain is Low affinity potassium transport system protein Kup from Shigella boydii serotype 18 (strain CDC 3083-94 / BS512).